Reading from the N-terminus, the 175-residue chain is Endothelin-2 (175 aa).

Positions methionine 1 to glycine 21 are cleaved as a signal peptide. The propeptide occupies glutamine 22 to phenylalanine 43. Intrachain disulfides connect cysteine 46/cysteine 60 and cysteine 48/cysteine 56. The propeptide occupies valine 67–arginine 175. The interval cysteine 93–histidine 108 is endothelin-like.

It belongs to the endothelin/sarafotoxin family.

It localises to the secreted. Functionally, vasoconstrictor. The polypeptide is Endothelin-2 (Edn2) (Mus musculus (Mouse)).